The sequence spans 352 residues: UPF0324 membrane protein BCE_5279 (352 aa).

Transmembrane regions (helical) follow at residues Phe25 to Leu47, Ile52 to Gly71, Val111 to Thr130, Gly140 to Val162, Thr169 to Tyr191, Tyr201 to Gly223, Ala230 to Phe252, Leu267 to Pro289, Val291 to Leu313, and Phe328 to Gly350.

Belongs to the UPF0324 family.

Its subcellular location is the cell membrane. This Bacillus cereus (strain ATCC 10987 / NRS 248) protein is UPF0324 membrane protein BCE_5279.